The sequence spans 280 residues: Probable 6-phosphogluconolactonase 2 (280 aa).

This sequence belongs to the glucosamine/galactosamine-6-phosphate isomerase family. 6-phosphogluconolactonase subfamily.

It carries out the reaction 6-phospho-D-glucono-1,5-lactone + H2O = 6-phospho-D-gluconate + H(+). It functions in the pathway carbohydrate degradation; pentose phosphate pathway; D-ribulose 5-phosphate from D-glucose 6-phosphate (oxidative stage): step 2/3. Hydrolysis of 6-phosphogluconolactone to 6-phosphogluconate. This Oryza sativa subsp. indica (Rice) protein is Probable 6-phosphogluconolactonase 2.